A 262-amino-acid polypeptide reads, in one-letter code: Sepiapterin reductase (262 aa).

Residue M1 is modified to N-acetylmethionine. NADP(+) is bound by residues G15–G21 and R43–S44. At S46 the chain carries Phosphoserine. Residue D70–L71 participates in NADP(+) binding. Substrate-binding positions include S158–L159 and Y171. Residue K175 participates in NADP(+) binding. S196 is modified (phosphoserine). Substrate is bound at residue G200. L202 to Q207 contacts NADP(+). At S214 the chain carries Phosphoserine. Residue D258 participates in substrate binding.

This sequence belongs to the sepiapterin reductase family. Homodimer.

The protein resides in the cytoplasm. The enzyme catalyses L-erythro-7,8-dihydrobiopterin + NADP(+) = L-sepiapterin + NADPH + H(+). It carries out the reaction (6R)-L-erythro-5,6,7,8-tetrahydrobiopterin + 2 NADP(+) = 6-pyruvoyl-5,6,7,8-tetrahydropterin + 2 NADPH + 2 H(+). It catalyses the reaction (S)-benzoin + NADP(+) = benzil + NADPH + H(+). Catalyzes the final one or two reductions in tetra-hydrobiopterin biosynthesis to form 5,6,7,8-tetrahydrobiopterin. The enzyme also catalyzes the reduction of benzil to (S)-benzoin. This Meriones unguiculatus (Mongolian jird) protein is Sepiapterin reductase (SPR).